A 306-amino-acid polypeptide reads, in one-letter code: Probable histidinol-phosphatase (306 aa).

Belongs to the PHP hydrolase family. HisK subfamily.

The enzyme catalyses L-histidinol phosphate + H2O = L-histidinol + phosphate. Its pathway is amino-acid biosynthesis; L-histidine biosynthesis; L-histidine from 5-phospho-alpha-D-ribose 1-diphosphate: step 8/9. This chain is Probable histidinol-phosphatase, found in Schizosaccharomyces pombe (strain 972 / ATCC 24843) (Fission yeast).